A 155-amino-acid polypeptide reads, in one-letter code: Fibroblast growth factor 2 (155 aa).

A propeptide spanning residues 1-9 (MAAGSITTL) is cleaved from the precursor. Residues 1–20 (MAAGSITTLPALPEDGGSSA) are disordered. Asparagine 36 serves as a coordination point for heparin. The Cell attachment site; atypical signature appears at 46–48 (DGR). Phosphotyrosine; by TEC is present on tyrosine 82. A Cell attachment site; atypical motif is present at residues 88–90 (DGR). Residue lysine 95 forms a Glycyl lysine isopeptide (Lys-Gly) (interchain with G-Cter in SUMO1) linkage. The segment at 128–144 (KRTGQYKLGPKTGPGQK) is heparin-binding.

This sequence belongs to the heparin-binding growth factors family. As to quaternary structure, monomer. Homodimer. Interacts with FGFR1, FGFR2, FGFR3 and FGFR4. Affinity between fibroblast growth factors (FGFs) and their receptors is increased by heparan sulfate glycosaminoglycans that function as coreceptors. Interacts with CSPG4, FGFBP1 and TEC. Found in a complex with FGFBP1, FGF1 and FGF2. Interacts with FGFBP3. Interacts with integrin ITGAV:ITGB3; the interaction is required for FGF2 signaling. Interacts with SNORC (via the extracellular domain). Interacts with glypican GPC3. Phosphorylation at Tyr-82 regulates FGF2 unconventional secretion.

It localises to the secreted. Its subcellular location is the nucleus. Its function is as follows. Acts as a ligand for FGFR1, FGFR2, FGFR3 and FGFR4. Also acts as an integrin ligand which is required for FGF2 signaling. Binds to integrin ITGAV:ITGB3. Plays an important role in the regulation of cell survival, cell division, cell differentiation and cell migration. Functions as a potent mitogen in vitro. Can induce angiogenesis. Mediates phosphorylation of ERK1/2 and thereby promotes retinal lens fiber differentiation. The protein is Fibroblast growth factor 2 (FGF2) of Ovis aries (Sheep).